A 280-amino-acid chain; its full sequence is Putative transcription factor kapC (280 aa).

The disordered stretch occupies residues 1-102; that stretch reads MQPALAPHPS…GKRPLSTSKR (102 aa). Positions 39–49 are enriched in pro residues; it reads PQPPAPQPPHM. The span at 79–89 shows a compositional bias: polar residues; the sequence is TQPDVTGQETP. The bZIP domain occupies 96-159; the sequence is PLSTSKRAAQ…EYIINLQSRL (64 aa). Residues 97–120 are basic motif; the sequence is LSTSKRAAQNRAAQRAFRQRKEAH. The tract at residues 124 to 155 is leucine-zipper; it reads LEGKVKAYESMGEAIKALQAENYQLREYIINL. The disordered stretch occupies residues 169–280; it reads LPGNIDLSQP…EQTHGLPLIS (112 aa). Residues 197–206 show a composition bias toward pro residues; that stretch reads APPPTAPQQP.

The protein belongs to the bZIP family.

The protein resides in the nucleus. In terms of biological role, putative transcription factor. This Aspergillus fumigatus (strain ATCC MYA-4609 / CBS 101355 / FGSC A1100 / Af293) (Neosartorya fumigata) protein is Putative transcription factor kapC (kapC).